A 267-amino-acid chain; its full sequence is Phosphate import ATP-binding protein PstB 2 (267 aa).

The ABC transporter domain occupies 21–262; the sequence is LATKDLHVYY…AQCQSTNDYV (242 aa). 53 to 60 provides a ligand contact to ATP; sequence GPSGCGKS.

The protein belongs to the ABC transporter superfamily. Phosphate importer (TC 3.A.1.7) family. The complex is composed of two ATP-binding proteins (PstB), two transmembrane proteins (PstC and PstA) and a solute-binding protein (PstS).

The protein resides in the cell membrane. The enzyme catalyses phosphate(out) + ATP + H2O = ADP + 2 phosphate(in) + H(+). Part of the ABC transporter complex PstSACB involved in phosphate import. Responsible for energy coupling to the transport system. This is Phosphate import ATP-binding protein PstB 2 from Streptococcus pyogenes serotype M18 (strain MGAS8232).